A 408-amino-acid chain; its full sequence is Glucose-1-phosphate adenylyltransferase (408 aa).

Alpha-D-glucose 1-phosphate-binding positions include tyrosine 100, glycine 165, 180–181, and serine 198; that span reads EK.

It belongs to the bacterial/plant glucose-1-phosphate adenylyltransferase family. Homotetramer.

The enzyme catalyses alpha-D-glucose 1-phosphate + ATP + H(+) = ADP-alpha-D-glucose + diphosphate. It functions in the pathway glycan biosynthesis; glycogen biosynthesis. Functionally, involved in the biosynthesis of ADP-glucose, a building block required for the elongation reactions to produce glycogen. Catalyzes the reaction between ATP and alpha-D-glucose 1-phosphate (G1P) to produce pyrophosphate and ADP-Glc. This chain is Glucose-1-phosphate adenylyltransferase, found in Cutibacterium acnes (strain DSM 16379 / KPA171202) (Propionibacterium acnes).